Reading from the N-terminus, the 1279-residue chain is Sterol regulatory element-binding protein cleavage-activating protein (1279 aa).

Residues 1 to 18 (MTLTERLREKISQAFYNH) are Cytoplasmic-facing. The chain crosses the membrane as a helical span at residues 19–39 (GLLCASYPIPIILFTGLCILA). Topologically, residues 40–279 (CCYPLLKLPL…SLVHVHFKEE (240 aa)) are lumenal. The segment at 46 to 284 (KLPLPGTGPV…HFKEEIGIAE (239 aa)) is loop-1. Residues 60 to 81 (PVKDYSPPPSASDHKPGEPSEQ) are disordered. Asparagine 263 carries N-linked (GlcNAc...) asparagine glycosylation. Residues 280 to 300 (IGIAELIPLVTTYIILFAYIY) traverse the membrane as a helical segment. One can recognise an SSD domain in the interval 284–442 (ELIPLVTTYI…MPFFTTVLSI (159 aa)). Topologically, residues 301-312 (FSTRKIDMVKSK) are cytoplasmic. Residues 313–333 (WGLALAAVVTVLSSLLMSVGL) form a helical membrane-spanning segment. Over 334–344 (CTLFGLTPTLN) the chain is Lumenal. The helical transmembrane segment at 345 to 365 (GGEIFPYLVVVIGLENVLVLT) threads the bilayer. At 366–401 (KSVVSTPVDLEVKLRIAQGLSSESWSIMKNMATELG) the chain is on the cytoplasmic side. Residues 402–422 (IILIGYFTLVPAIQEFCLFAV) form a helical membrane-spanning segment. A topological domain (lumenal) is located at residue valine 423. The helical transmembrane segment at 424 to 444 (GLVSDFFLQMPFFTTVLSIDI) threads the bilayer. At 445–518 (RRMELADLNK…FLARTRLAQR (74 aa)) the chain is on the cytoplasmic side. The ER export signal signature appears at 447 to 452 (MELADL). Residues lysine 454 and lysine 466 each participate in a glycyl lysine isopeptide (Lys-Gly) (interchain with G-Cter in ubiquitin) cross-link. A helical membrane pass occupies residues 519-539 (LIMAGTVVWIGILAYTDPAGL). The interval 535 to 710 (DPAGLRTYLA…QAHRDVTLYK (176 aa)) is loop-7. At 540-707 (RTYLAAQVTE…GVAQAHRDVT (168 aa)) the chain is on the lumenal side. The disordered stretch occupies residues 588–617 (LENQTLPGEPPEPGGQAEGVHDSPAPEVTW). N-linked (GlcNAc...) asparagine glycans are attached at residues asparagine 590 and asparagine 641. Residues 668 to 696 (EGRHPQDSRSAWSPPQPAQGGLWDAGPKG) form a disordered region. The helical transmembrane segment at 708–728 (LYKVAALGLATGILLVLLLCL) threads the bilayer. The Cytoplasmic portion of the chain corresponds to 729 to 1279 (YRVLCPRNYG…YVPSVLEKLD (551 aa)). The tract at residues 730-1279 (RVLCPRNYGQ…YVPSVLEKLD (550 aa)) is interaction with SREBF2. The stretch at 770 to 810 (VLRGHLMDIECLASDGMLLVSCCLAGHVCVWDAQTGDCLTR) is one WD 1 repeat. A phosphoserine mark is found at serine 821, serine 837, serine 843, and serine 850. Disordered stretches follow at residues 834–868 (ERLS…LFGD), 883–903 (HPRL…CRRT), and 925–959 (VPMH…GSPS). The segment covering 885–896 (RLPELDHPEPRH) has biased composition (basic and acidic residues). A compositionally biased stretch (pro residues) spans 929–944 (TPAPRPPSPGPTPPQT). Serine 936 is subject to Phosphoserine. WD repeat units lie at residues 952–1002 (PPEK…LRCS) and 1005–1042 (EVAS…ALSP). Position 1051 is an omega-N-methylarginine (arginine 1051). 4 WD repeats span residues 1077–1114 (AHQK…CLFT), 1117–1155 (GHSG…RVSH), 1158–1195 (AHRG…KLYS), and 1197–1235 (QQDL…LLQT).

This sequence belongs to the WD repeat SCAP family. In terms of assembly, membrane region forms a homotetramer. Component of the SCAP-SREBP complex (composed of SCAP and SREBF1/SREBP1 or SREBF2/SREBP2); interacts with SREBF1/SREBP1 or SREBF2/SREBP2 through its C-terminal cytoplasmic domain. Forms a ternary complex with INSIG1 or INSIG2 through its transmembrane domains at high sterol concentrations. Interacts with PAQR3; the interaction anchors the SCAP-SREBP complex to the Golgi apparatus in low cholesterol conditions. Interacts with the SEC23-SEC24 complex in a SAR1-GTP-dependent manner through an ER export signal in its third cytoplasmic loop. Interacts with RNF139; the interaction inhibits the interaction of SCAP with SEC24B and hampering the ER to Golgi transport of the SCAP-SREBP complex. Interacts with SPRING1. Ubiquitinated at Lys-454 and Lys-466. RNF145 triggers ubiquitination of SCAP, likely inhibiting SCAP-SREBP complex transport to the Golgi apparatus and the subsequent processing/maturation of SREBF2/SREBP2. Widely expressed with higher levels in lung, kidney, gut, brain and adipose tissue. In terms of tissue distribution, expressed in liver and muscle. Isoform 3 expressed in testis. As to expression, expressed in testis.

It is found in the endoplasmic reticulum membrane. The protein localises to the golgi apparatus membrane. It localises to the cytoplasmic vesicle. The protein resides in the COPII-coated vesicle membrane. Functionally, escort protein required for cholesterol as well as lipid homeostasis. Regulates export of the SCAP-SREBP complex from the endoplasmic reticulum to the Golgi upon low cholesterol, thereby regulating the processing of sterol regulatory element-binding proteins (SREBPs) SREBF1/SREBP1 and SREBF2/SREBP2. At high sterol concentrations, formation of a ternary complex with INSIG (INSIG1 or INSIG2) leads to mask the ER export signal in SCAP, promoting retention of the complex in the endoplasmic reticulum. Low sterol concentrations trigger release of INSIG, a conformational change in the SSD domain of SCAP, unmasking of the ER export signal, promoting recruitment into COPII-coated vesicles and transport of the SCAP-SREBP to the Golgi: in the Golgi, SREBPs are then processed, releasing the transcription factor fragment of SREBPs from the membrane, its import into the nucleus and up-regulation of LDLR, INSIG1 and the mevalonate pathway. Binds cholesterol via its SSD domain. The sequence is that of Sterol regulatory element-binding protein cleavage-activating protein from Sus scrofa (Pig).